The primary structure comprises 647 residues: Macrolide export ATP-binding/permease protein MacB (647 aa).

The region spanning 6-244 is the ABC transporter domain; the sequence is LEISGCYRTF…VDTAVTKINN (239 aa). 42-49 serves as a coordination point for ATP; the sequence is GASGSGKS. The next 4 membrane-spanning stretches (helical) occupy residues 273 to 293, 522 to 542, 577 to 597, and 612 to 632; these read FLTM…VALG, LLIS…VMNI, LVCL…GVVF, and SIVA…FLPA.

Belongs to the ABC transporter superfamily. Macrolide exporter (TC 3.A.1.122) family. In terms of assembly, homodimer. Part of the tripartite efflux system MacAB-TolC, which is composed of an inner membrane transporter, MacB, a periplasmic membrane fusion protein, MacA, and an outer membrane component, TolC. The complex forms a large protein conduit and can translocate molecules across both the inner and outer membranes. Interacts with MacA.

The protein localises to the cell inner membrane. Part of the tripartite efflux system MacAB-TolC. MacB is a non-canonical ABC transporter that contains transmembrane domains (TMD), which form a pore in the inner membrane, and an ATP-binding domain (NBD), which is responsible for energy generation. Confers resistance against macrolides. The protein is Macrolide export ATP-binding/permease protein MacB of Shewanella sp. (strain W3-18-1).